We begin with the raw amino-acid sequence, 520 residues long: GMP synthase [glutamine-hydrolyzing] (520 aa).

A Glutamine amidotransferase type-1 domain is found at 9–202; sequence KILILDFGSQ…VRQICGCTGQ (194 aa). Cysteine 86 serves as the catalytic Nucleophile. Catalysis depends on residues histidine 176 and glutamate 178. Residues 203–395 enclose the GMPS ATP-PPase domain; it reads WTPGQIIEDA…LGLPHPMVYR (193 aa). 230–236 provides a ligand contact to ATP; the sequence is SGGVDSS.

As to quaternary structure, homodimer.

It carries out the reaction XMP + L-glutamine + ATP + H2O = GMP + L-glutamate + AMP + diphosphate + 2 H(+). It functions in the pathway purine metabolism; GMP biosynthesis; GMP from XMP (L-Gln route): step 1/1. Functionally, catalyzes the synthesis of GMP from XMP. In Syntrophotalea carbinolica (strain DSM 2380 / NBRC 103641 / GraBd1) (Pelobacter carbinolicus), this protein is GMP synthase [glutamine-hydrolyzing].